A 349-amino-acid polypeptide reads, in one-letter code: tRNA pseudouridine synthase D (349 aa).

A substrate-binding site is contributed by F27. The active-site Nucleophile is the D80. N129 provides a ligand contact to substrate. Residues 155-303 (GVPNYFGAQR…VEAARRAMLL (149 aa)) form the TRUD domain. F329 contacts substrate.

It belongs to the pseudouridine synthase TruD family.

It carries out the reaction uridine(13) in tRNA = pseudouridine(13) in tRNA. Functionally, responsible for synthesis of pseudouridine from uracil-13 in transfer RNAs. The sequence is that of tRNA pseudouridine synthase D from Escherichia coli (strain 55989 / EAEC).